Here is a 336-residue protein sequence, read N- to C-terminus: Palmitoyltransferase SWF1 (336 aa).

Residues 1–2 (MS) lie on the Lumenal side of the membrane. Residues 3 to 23 (WNLLFVLLIGFVVLILLSPVF) traverse the membrane as a helical segment. At 24–50 (KSTWPFSTFYRNVFQPFLVDDQKYRWK) the chain is on the cytoplasmic side. A helical transmembrane segment spans residues 51-71 (LHLVPLFYTSIYLYLVYTYHM). The Lumenal portion of the chain corresponds to 72–86 (RVESTIKNELFLLER). The chain crosses the membrane as a helical span at residues 87-107 (ILIVPIIILPPVALGILAMVS). Residues 108–179 (RAEDSKDHKS…CIGKGNYLQF (72 aa)) are Cytoplasmic-facing. The region spanning 134–184 (IKCSTCRIVKPARSKHCSICNRCVLVADHHCIWINNCIGKGNYLQFYLFLI) is the DHHC domain. A helical transmembrane segment spans residues 180 to 200 (YLFLISNIFSMCYAFLRLWYI). Residues 201–216 (SLNSTSTLPRAVLTLT) lie on the Lumenal side of the membrane. Residues 217–237 (ILCGCFTIICAIFTYLQLAIV) form a helical membrane-spanning segment. The Cytoplasmic portion of the chain corresponds to 238-336 (KEGMTTNEQD…TFLANLTDLI (99 aa)).

It belongs to the DHHC palmitoyltransferase family. SWF1 subfamily.

The protein resides in the endoplasmic reticulum membrane. The enzyme catalyses L-cysteinyl-[protein] + hexadecanoyl-CoA = S-hexadecanoyl-L-cysteinyl-[protein] + CoA. In terms of biological role, palmitoyltransferase that targets several endosomal SNAREs. Palmitoylates the SNAREs SNC1, SNC2, SYN8 and TLG1, at cysteine residues close to the cytoplasmic end of their transmembrane domain. May have a role in the cellular quality control of transmembrane domain-containing proteins. This is Palmitoyltransferase SWF1 (SWF1) from Saccharomyces cerevisiae (strain ATCC 204508 / S288c) (Baker's yeast).